A 325-amino-acid chain; its full sequence is MDKSSGELVTLTPNNNNTVQPVALMRLGVFVPTLKSLKNSKKNTLSRTDATEELTRLSLARAEGFDKVEITGPRLDMDNDFKTWVGIIHSFARHNVIGDKVELPFVEFAKLCGIPSSQSSRSLRERISPSLKRIAGTVISFSRTDEKHTREYITHLVQSAYYDTERDIVQLQADPRLFELYQFDRKVLLQLKAINALKRRESAQALYTFIESLPRDPAPISLARLRARLNLKSPVFSQNQTVRRAMEQLREIGYLDYTEIQRGRTKFFCIHYRRPRLKAPNDESKENPLPPSPAEKVSPEMAEKLALLEKLGITLDDLEKLFKSR.

The tract at residues 279-298 (APNDESKENPLPPSPAEKVS) is disordered.

It belongs to the initiator RepB protein family.

In terms of biological role, this protein is essential for plasmid replication; it is involved in copy control functions. In vitro, binds to the DNA repeat units, BCDD'D'', EFG and HIJ. This is RepFIB replication protein A (repA) from Escherichia coli.